A 491-amino-acid chain; its full sequence is METSYREEEARRKASLLHCIFFFLLGALAMAAAIAVLHESSYWEWRCNRLTDIVVDGDDGDGPSSSEVVDGGGEWGMVRTRGAQFVVGGGRPFYVNGFNTYWLMVLAVDPSTRGKVTEVFRQAAAVGLTVCRTWAFNDGGWRALQKSPGVYDEEVFKALDFVVSEARKHKIRLILPLINNWDDYGGKAQYVRWAQAAAAGAGADAFFSDETVRGYFKSHVTAVLTRVNAYTGVAYRDDPTIMAWELMNEPRCASDPTGDTLQAWIAEMAFHVKSVDPAHLLGVGAEGFYGPSSPPARLRVNPNADVALAGADFVRNHRVLGVDFASVHVYPDTWLPAGATKEAQLRFATSWVEAHIADAEGALGGMPVLFAEFGVSTRGARAAFNATSRDAFIEAVYGAMLRSTRRGGGGAGALLWQVFPEGTDYMDDGYAVVLPRAAATAGIVAAHSRRLQSFNSRCAWSCRWGCNKRDNDTAETTTAEADVDVSFHHEL.

Residues 1 to 31 (METSYREEEARRKASLLHCIFFFLLGALAMA) form the signal peptide. Residues W134 and N248 each coordinate substrate. Residue E249 is the Proton donor of the active site. Y330 is a substrate binding site. The active-site Nucleophile is the E372. N-linked (GlcNAc...) asparagine glycosylation is present at N385. W416 lines the substrate pocket. N471 carries an N-linked (GlcNAc...) asparagine glycan.

The protein belongs to the glycosyl hydrolase 5 (cellulase A) family. Expression not detected.

Its subcellular location is the secreted. The catalysed reaction is Random hydrolysis of (1-&gt;4)-beta-D-mannosidic linkages in mannans, galactomannans and glucomannans.. This chain is Putative mannan endo-1,4-beta-mannosidase 5 (MAN5), found in Oryza sativa subsp. japonica (Rice).